We begin with the raw amino-acid sequence, 361 residues long: Protease I (361 aa).

The protein belongs to the peptidase U35 family. As to quaternary structure, might interact with viral portal protein; this interaction gives rise to an early 25S initiator complex. The scaffolding protein Z and the capsid protein T should then be added to the initiator complex to yield immature prohead. Host GroEL and GroES are also essential for the correct assembly of viral head. Post-translationally, the N-terminus is acetylated.

The protein localises to the host cytoplasm. Protease I is involved in virion assembly and maturation. Protease I cleaves the portal protein to yield mature procapsids competent for DNA packaging. Isoform scaffold protein Z probably helps the capsid proteins to assemble into a functional capsid. The polypeptide is Protease I (I) (Escherichia phage Mu (Bacteriophage Mu)).